A 180-amino-acid chain; its full sequence is Large ribosomal subunit protein uL6 (180 aa).

The protein belongs to the universal ribosomal protein uL6 family. As to quaternary structure, part of the 50S ribosomal subunit.

Functionally, this protein binds to the 23S rRNA, and is important in its secondary structure. It is located near the subunit interface in the base of the L7/L12 stalk, and near the tRNA binding site of the peptidyltransferase center. This is Large ribosomal subunit protein uL6 from Anaeromyxobacter dehalogenans (strain 2CP-1 / ATCC BAA-258).